Here is a 205-residue protein sequence, read N- to C-terminus: Probable GTP-binding protein EngB (205 aa).

An EngB-type G domain is found at 21-196 (QVPEVAFAGR…VHEVSKCVKE (176 aa)). GTP-binding positions include 29–36 (GRSNVGKS), 56–60 (GSTRQ), 74–77 (DLPG), 141–144 (TKID), and 172–177 (IIGTSS). 2 residues coordinate Mg(2+): Ser-36 and Thr-58.

It belongs to the TRAFAC class TrmE-Era-EngA-EngB-Septin-like GTPase superfamily. EngB GTPase family. The cofactor is Mg(2+).

In terms of biological role, necessary for normal cell division and for the maintenance of normal septation. In Anaplasma marginale (strain Florida), this protein is Probable GTP-binding protein EngB.